The primary structure comprises 170 residues: Probable peptide methionine sulfoxide reductase (170 aa).

Belongs to the MsrA Met sulfoxide reductase family.

Its subcellular location is the cytoplasm. It localises to the nucleus. The catalysed reaction is L-methionyl-[protein] + [thioredoxin]-disulfide + H2O = L-methionyl-(S)-S-oxide-[protein] + [thioredoxin]-dithiol. The enzyme catalyses [thioredoxin]-disulfide + L-methionine + H2O = L-methionine (S)-S-oxide + [thioredoxin]-dithiol. In terms of biological role, has an important function as a repair enzyme for proteins that have been inactivated by oxidation. Catalyzes the reversible oxidation-reduction of methionine sulfoxide in proteins to methionine. The sequence is that of Probable peptide methionine sulfoxide reductase (mxr1) from Schizosaccharomyces pombe (strain 972 / ATCC 24843) (Fission yeast).